Here is a 103-residue protein sequence, read N- to C-terminus: Potassium voltage-gated channel subfamily E member 3 (103 aa).

Residues Asn-5, Asn-22, and Asn-41 are each glycosylated (N-linked (GlcNAc...) asparagine). Positions 30–52 are disordered; it reads LCRPGPGPGPDNQTEDRRASLPG. The chain crosses the membrane as a helical span at residues 57 to 77; it reads SYMYILFVMFLFAVTVGSLIL. Residues 68 to 79 are interaction with KCNQ1; the sequence is FAVTVGSLILGY. Residues 78-103 lie on the Cytoplasmic side of the membrane; sequence GYTRSRKVDKRSDPYHVYIKNRVSMI.

Belongs to the potassium channel KCNE family. Interacts with KCNB1. Interacts with KCNC2. Associates with KCNC4/Kv3.4. Interacts with KCNQ1; associates with a KCNQ1:KCNE3 stoichiometry of 4:4; produces a current with nearly instantaneous activation with a linear current-voltage relationship and alters membrane raft localization; affects KCNQ1 structure and gating properties.

The protein localises to the cell membrane. It localises to the cytoplasm. The protein resides in the perikaryon. It is found in the cell projection. Its subcellular location is the dendrite. The protein localises to the membrane raft. Functionally, ancillary protein that functions as a regulatory subunit of the voltage-gated potassium (Kv) channel complex composed of pore-forming and potassium-conducting alpha subunits and of regulatory beta subunits. KCNE3 beta subunit modulates the gating kinetics and enhances stability of the channel complex. Alters the gating of the delayed rectifier Kv channel containing KCNB1 alpha subunit. Associates with KCNC4/Kv3.4 alpha subunit to form the subthreshold Kv channel in skeletal muscle and to establish the resting membrane potential (RMP) in muscle cells. Association with KCNQ1/KCLQT1 alpha subunit may form the intestinal cAMP-stimulated potassium channel involved in chloride secretion that produces a current with nearly instantaneous activation with a linear current-voltage relationship. This Mus musculus (Mouse) protein is Potassium voltage-gated channel subfamily E member 3.